Consider the following 948-residue polypeptide: Insulin receptor substrate 1 (948 aa).

Residues 8–109 (GMALSGYLKK…WLDKLLVLQR (102 aa)) enclose the PH domain. An IRS-type PTB domain is found at 122 to 236 (YDQVWQVVIQ…SAMSAKTESN (115 aa)). The tract at residues 247 to 270 (PDLSHEPMRKRSSSANEASKPINV) is disordered. Phosphoserine is present on residues Ser286 and Ser287. Polar residues predominate over residues 304–329 (RNGTLSESSNQTYFGSNHGLRSNTIS). The tract at residues 304–373 (RNGTLSESSN…SDDNGSFSHY (70 aa)) is disordered. A Phosphoserine modification is found at Ser342. Tyr410 is modified (phosphotyrosine; by INSR). The YXXM motif 1 motif lies at 410–413 (YIPM). Residues 528-559 (ANRSQSSITKEGTSYSTSSNRQKKSTSAPLLS) form a disordered region. The span at 529–556 (NRSQSSITKEGTSYSTSSNRQKKSTSAP) shows a compositional bias: polar residues. Ser554 is modified (phosphoserine). A YXXM motif 2 motif is present at residues 640 to 643 (YLEM). Positions 703 to 734 (EKKSNSPLNETPCSLKPTDVESNSHDEHSTNN) are disordered. Residues 720–731 (TDVESNSHDEHS) are compositionally biased toward basic and acidic residues. Tyr891 carries the phosphotyrosine; by INSR modification. Positions 907-948 (YLKRGSRESPPVSACPGDGNTYAKIDFDQSDSSSSSSNIFNT) are disordered. Residues Ser912 and Ser915 each carry the phosphoserine modification. Tyr928 is modified (phosphotyrosine; by INSR). A compositionally biased stretch (low complexity) spans 936–948 (SDSSSSSSNIFNT).

Bindings to phosphatidylinositol 3-kinase and SHP2.

Activates phosphatidylinositol 3-kinase when bound to the regulatory p85 subunit. May mediate the control of various cellular processes by insulin-like peptides. When phosphorylated by the insulin receptor binds specifically to various cellular proteins containing SH2 domains. Involved in control of cell proliferation, cell size, and body and organ growth throughout development. Also has a role in a signaling pathway controlling the physiological response required to endure periods of low nutrient conditions. Insulin/insulin-like growth factor (IGF) signaling pathway has a role in regulating aging and is necessary in the ovary for vitellogenic maturation. In Drosophila erecta (Fruit fly), this protein is Insulin receptor substrate 1.